The chain runs to 131 residues: Sperm microtubule inner protein 11 (131 aa).

The tract at residues 18–44 (KKRNTTEETNQKEPEPTRLPPIISKDG) is disordered. Basic and acidic residues predominate over residues 21-33 (NTTEETNQKEPEP).

In terms of assembly, microtubule inner protein component of sperm flagellar doublet microtubules.

It localises to the cytoplasm. The protein resides in the cytoskeleton. The protein localises to the flagellum axoneme. In terms of biological role, microtubule inner protein (MIP) part of the dynein-decorated doublet microtubules (DMTs) in flagellum axoneme. May serve to reinforce and thus stabilize the microtubule structure in the sperm flagella. This Homo sapiens (Human) protein is Sperm microtubule inner protein 11.